A 258-amino-acid chain; its full sequence is Spindlin-3 (258 aa).

The tract at residues 1-23 is disordered; it reads MKTPFGKAAAGQRSRTGAGHGSV. Tudor-like domain stretches follow at residues 50 to 99, 129 to 178, and 210 to 255; these read VGCR…LELH, VGKA…YQLL, and VGKQ…YDLV. Histone H3K4me3 and H3R8me2a binding regions lie at residues glutamate 138 and 246–248; that span reads DFH.

It belongs to the SPIN/STSY family. In terms of assembly, interacts with C11orf84/SPINDOC.

Exhibits H3K4me3-binding activity. This chain is Spindlin-3 (SPIN3), found in Pongo abelii (Sumatran orangutan).